The following is a 104-amino-acid chain: QDWLTFQKKHITNTRDVDCDNIMSTNLFHCKDKNTFIYSRPEPVKAICKGIIASKNVLTTSEFYLSDCNVTSRPCKYKLKKSTNKFCVTCENQAPVHFVGVGSC.

Glutamine 1 carries the pyrrolidone carboxylic acid modification. Histidine 10 (proton acceptor) is an active-site residue. 4 disulfides stabilise this stretch: cysteine 19-cysteine 68, cysteine 30-cysteine 75, cysteine 48-cysteine 90, and cysteine 87-cysteine 104. Position 31-35 (31-35) interacts with substrate; sequence KDKNT. Residue histidine 97 is the Proton donor of the active site.

The protein belongs to the pancreatic ribonuclease family.

Functionally, basic protein with antiproliferative/cytotoxic activity against several tumor cell lines in vitro, as well as antitumor in vivo. It exhibits a ribonuclease-like activity against high molecular weight ribosomal RNA. The polypeptide is Protein P-30 (Lithobates pipiens (Northern leopard frog)).